Consider the following 438-residue polypeptide: Transmembrane protein 184C (438 aa).

7 helical membrane passes run 17–37 (LAVVLYLLSIVVAVPLCVWEL), 48–68 (AWFIAGIFLLLTIPISLWVIL), 86–106 (ILWMVPIYSLDSWIALKYPSI), 176–196 (VLQYTVVRPFTTIIALVCELL), 212–232 (YLVIINNMSQLFAMYCLLLFY), 254–274 (VVFVSFWQAVVIALLVKVGVI), and 287–307 (AVATGLQDFIICIEMFLAAIA). The disordered stretch occupies residues 358-438 (PRKKFFPEDQ…EEPSEKPVAS (81 aa)). Composition is skewed to low complexity over residues 374-390 (SLLSSSSQDALSVASSV) and 404-413 (TVTPQTTPTT). Residues 426 to 438 (GVREEPSEKPVAS) are compositionally biased toward basic and acidic residues.

It belongs to the TMEM184 family.

It is found in the membrane. In terms of biological role, possible tumor suppressor which may play a role in cell growth. This is Transmembrane protein 184C (TMEM184C) from Bos taurus (Bovine).